Reading from the N-terminus, the 309-residue chain is DnaJ protein ERDJ7 (309 aa).

A signal peptide spans 1–36 (MSQVGSAGEGSNSMAAAPPPRLLLLVVLLLVPVSNA). The Lumenal portion of the chain corresponds to 37–130 (IYCEEDDCYD…YRAYYGHKTD (94 aa)). Residues 43 to 107 (DCYDLLGVKQ…STRGQYDYAI (65 aa)) form the J domain. Asparagine 55 carries an N-linked (GlcNAc...) asparagine glycan. The helical transmembrane segment at 131–151 (PRAVLIGLLLIISAFQYLNQF) threads the bilayer. At 152–219 (GRYSKAIETV…GVEKPSLWRL (68 aa)) the chain is on the cytoplasmic side. Residues 220–242 (YGVQFILLPYSIGKVLSWKFCWF) form a helical membrane-spanning segment. Residues 243–309 (WRYRIKKLPY…EMRKESKRRR (67 aa)) lie on the Lumenal side of the membrane.

Its subcellular location is the endoplasmic reticulum membrane. Its function is as follows. May play a role in protein folding in the endoplasmic reticulum. This chain is DnaJ protein ERDJ7, found in Oryza sativa subsp. japonica (Rice).